The following is a 442-amino-acid chain: Citrate synthase (442 aa).

Residues His-274, His-320, and Asp-375 contribute to the active site.

This sequence belongs to the citrate synthase family.

The enzyme catalyses oxaloacetate + acetyl-CoA + H2O = citrate + CoA + H(+). The protein operates within carbohydrate metabolism; tricarboxylic acid cycle; isocitrate from oxaloacetate: step 1/2. Its function is as follows. Catalyzes both citrate generation and citrate cleavage. Part of a reversible tricarboxylic acid (TCA) cycle that can fix carbon dioxide autotrophically and may represent an ancestral mode of the conventional reductive TCA (rTCA) cycle. The direction is controlled by the available carbon source(s). This chain is Citrate synthase, found in Thermosulfidibacter takaii (strain DSM 17441 / JCM 13301 / NBRC 103674 / ABI70S6).